A 187-amino-acid polypeptide reads, in one-letter code: GTP cyclohydrolase 1 (187 aa).

Zn(2+) contacts are provided by C76, H79, and C148.

This sequence belongs to the GTP cyclohydrolase I family. Homomer.

The catalysed reaction is GTP + H2O = 7,8-dihydroneopterin 3'-triphosphate + formate + H(+). The protein operates within cofactor biosynthesis; 7,8-dihydroneopterin triphosphate biosynthesis; 7,8-dihydroneopterin triphosphate from GTP: step 1/1. This is GTP cyclohydrolase 1 from Streptococcus gordonii (strain Challis / ATCC 35105 / BCRC 15272 / CH1 / DL1 / V288).